Consider the following 133-residue polypeptide: Holo-[acyl-carrier-protein] synthase (133 aa).

Residues Asp-8 and Glu-58 each coordinate Mg(2+).

It belongs to the P-Pant transferase superfamily. AcpS family. It depends on Mg(2+) as a cofactor.

The protein resides in the cytoplasm. The enzyme catalyses apo-[ACP] + CoA = holo-[ACP] + adenosine 3',5'-bisphosphate + H(+). Its function is as follows. Transfers the 4'-phosphopantetheine moiety from coenzyme A to a Ser of acyl-carrier-protein. This is Holo-[acyl-carrier-protein] synthase from Erythrobacter litoralis (strain HTCC2594).